A 208-amino-acid polypeptide reads, in one-letter code: Small ribosomal subunit protein uS4 (208 aa).

An S4 RNA-binding domain is found at 97–158 (TRLDNVIYRM…RAQKYLCVQE (62 aa)).

This sequence belongs to the universal ribosomal protein uS4 family. In terms of assembly, part of the 30S ribosomal subunit. Contacts protein S5. The interaction surface between S4 and S5 is involved in control of translational fidelity.

In terms of biological role, one of the primary rRNA binding proteins, it binds directly to 16S rRNA where it nucleates assembly of the body of the 30S subunit. With S5 and S12 plays an important role in translational accuracy. The chain is Small ribosomal subunit protein uS4 from Xylella fastidiosa (strain M23).